We begin with the raw amino-acid sequence, 406 residues long: MTYSVDKVRADFPVLSREVNGLPLAYLDSAASAQKPSQVIDAEAEFYRHGYAAVHRGIHTLSAQATEKMESVRKRASLFINARSAEELVFVRGTTEGINLVANSWGNSNVRAGDNIIISQMEHHANIVPWQMLCARVGAELRVIPLNPDGTLQLEMLPNLFDEKTRLLAITHVSNVLGTENPLAEMITLAHQHGAKVLVDGAQAVMHHPVDVQALDCDFYVFSGHKLYGPTGIGILYVKEALLQEMPPWEGGGSMIATVSLSEGTTWTKAPWRFEAGTPNTGGIIGLGAALEYVSALGLNNIAEYEQNLMHYALSQLESVPDLTLYGPQNRLGVIAFNLGKHHAYDVGSFLDNYGIAVRTGHHCAMPLMAYYNVPAMCRASLAMYNTHEEVDRLVTGLQRIHRLLG.

K226 bears the N6-(pyridoxal phosphate)lysine mark. C364 acts as the Cysteine persulfide intermediate in catalysis.

The protein belongs to the class-V pyridoxal-phosphate-dependent aminotransferase family. Csd subfamily. In terms of assembly, homodimer. Interacts with SufE and the SufBCD complex composed of SufB, SufC and SufD. The interaction with SufE is required to mediate the direct transfer of the sulfur atom from the S-sulfanylcysteine. Pyridoxal 5'-phosphate serves as cofactor.

It localises to the cytoplasm. It catalyses the reaction (sulfur carrier)-H + L-cysteine = (sulfur carrier)-SH + L-alanine. The enzyme catalyses L-selenocysteine + AH2 = hydrogenselenide + L-alanine + A + H(+). Its pathway is cofactor biosynthesis; iron-sulfur cluster biosynthesis. Cysteine desulfurases mobilize the sulfur from L-cysteine to yield L-alanine, an essential step in sulfur metabolism for biosynthesis of a variety of sulfur-containing biomolecules. Component of the suf operon, which is activated and required under specific conditions such as oxidative stress and iron limitation. Acts as a potent selenocysteine lyase in vitro, that mobilizes selenium from L-selenocysteine. Selenocysteine lyase activity is however unsure in vivo. This is Cysteine desulfurase from Escherichia coli O7:K1 (strain IAI39 / ExPEC).